We begin with the raw amino-acid sequence, 692 residues long: Polyphosphate kinase (692 aa).

An ATP-binding site is contributed by asparagine 57. Arginine 383 and arginine 413 together coordinate Mg(2+). The Phosphohistidine intermediate role is filled by histidine 443. Residues tyrosine 476, arginine 572, and histidine 600 each coordinate ATP.

This sequence belongs to the polyphosphate kinase 1 (PPK1) family. It depends on Mg(2+) as a cofactor. In terms of processing, an intermediate of this reaction is the autophosphorylated ppk in which a phosphate is covalently linked to a histidine residue through a N-P bond.

The catalysed reaction is [phosphate](n) + ATP = [phosphate](n+1) + ADP. In terms of biological role, catalyzes the reversible transfer of the terminal phosphate of ATP to form a long-chain polyphosphate (polyP). The chain is Polyphosphate kinase from Acinetobacter baumannii (strain AYE).